The chain runs to 736 residues: Probable methionine--tRNA ligase, cytoplasmic (736 aa).

The short motif at 25–35 is the 'HIGH' region element; that stretch reads PYVNNVPHLGN. A 'KMSKS' region motif is present at residues 346–350; sequence KFSKS. Lys-349 provides a ligand contact to ATP. The tRNA-binding domain occupies 573–680; it reads PEFPIDMKIA…QSIEAGSKIA (108 aa).

Belongs to the class-I aminoacyl-tRNA synthetase family.

The protein localises to the cytoplasm. It carries out the reaction tRNA(Met) + L-methionine + ATP = L-methionyl-tRNA(Met) + AMP + diphosphate. The polypeptide is Probable methionine--tRNA ligase, cytoplasmic (metS) (Dictyostelium discoideum (Social amoeba)).